Consider the following 482-residue polypeptide: Argininosuccinate synthase (482 aa).

Residues 17–25 (AFSGGLDTS) and A43 each bind ATP. Y99 lines the L-citrulline pocket. Positions 129 and 131 each coordinate ATP. L-aspartate contacts are provided by T131, N135, and D136. N135 lines the L-citrulline pocket. D136 lines the ATP pocket. 2 residues coordinate L-citrulline: R139 and S192. Residue D194 coordinates ATP. Residues T201, E203, and E280 each coordinate L-citrulline. Positions 461–482 (SRGEATDEETMLDRAAMESGTD) are disordered.

This sequence belongs to the argininosuccinate synthase family. Type 2 subfamily. In terms of assembly, homotetramer.

It is found in the cytoplasm. It carries out the reaction L-citrulline + L-aspartate + ATP = 2-(N(omega)-L-arginino)succinate + AMP + diphosphate + H(+). Its pathway is amino-acid biosynthesis; L-arginine biosynthesis; L-arginine from L-ornithine and carbamoyl phosphate: step 2/3. The polypeptide is Argininosuccinate synthase (argG) (Streptomyces lavendulae).